The chain runs to 190 residues: Cytoplasmic envelopment protein 3 (190 aa).

The N-myristoyl glycine; by host moiety is linked to residue glycine 2. Residues 14 to 190 (GTTSGEPLKD…TKKPAASLPF (177 aa)) are disordered. Positions 30-43 (SLRSYDNIPPTSSS) are enriched in polar residues. Residues 44–58 (DEGEDDDDGEDDDNE) are compositionally biased toward acidic residues. A compositionally biased stretch (basic and acidic residues) spans 80 to 90 (SHREATHDGPK). Residues 108–123 (KQSKKKKKPSKHHHHQ) are compositionally biased toward basic residues. Over residues 130-139 (ETDDLDEEDT) the composition is skewed to acidic residues.

The protein belongs to the herpesviridae cytoplasmic envelopment protein 3 family. Interacts with cytoplasmic envelopment protein 2; this interaction is essential for the proper localization of each protein to the assembly complex and thus for the production of infectious virus. Post-translationally, myristoylation and palmitoylation (probably on one or more of the nearby cysteines at the N-terminus) enable membrane-binding and Golgi apparatus-specific targeting and are essential for efficient packaging. In terms of processing, phosphorylated. Phosphorylation does not seem to be required for recycling to the host Golgi apparatus. Packaging is selective for underphosphorylated forms.

It is found in the virion tegument. It localises to the virion membrane. The protein localises to the host cell membrane. The protein resides in the host Golgi apparatus membrane. Functionally, plays an important role in the cytoplasmic envelopment of tegument proteins and capsids during the assembly and egress processes. Also participates in viral entry at the fusion step probably by regulating the core fusion machinery. The sequence is that of Cytoplasmic envelopment protein 3 (UL99) from Human cytomegalovirus (strain Merlin) (HHV-5).